A 105-amino-acid polypeptide reads, in one-letter code: Heat shock protein HspQ (105 aa).

A disordered region spans residues 75-105 (GEAQEAHPEQPSLDELAESIRHQLQAPRLRN).

Belongs to the HspQ family.

It is found in the cytoplasm. Functionally, involved in the degradation of certain denaturated proteins, including DnaA, during heat shock stress. In Serratia proteamaculans (strain 568), this protein is Heat shock protein HspQ.